We begin with the raw amino-acid sequence, 152 residues long: Large ribosomal subunit protein bL9 (152 aa).

It belongs to the bacterial ribosomal protein bL9 family.

In terms of biological role, binds to the 23S rRNA. The polypeptide is Large ribosomal subunit protein bL9 (Trichormus variabilis (strain ATCC 29413 / PCC 7937) (Anabaena variabilis)).